Reading from the N-terminus, the 244-residue chain is 1-(5-phosphoribosyl)-5-[(5-phosphoribosylamino)methylideneamino] imidazole-4-carboxamide isomerase (244 aa).

The active-site Proton acceptor is the Asp10. The active-site Proton donor is Asp132.

Belongs to the HisA/HisF family.

The protein resides in the cytoplasm. It catalyses the reaction 1-(5-phospho-beta-D-ribosyl)-5-[(5-phospho-beta-D-ribosylamino)methylideneamino]imidazole-4-carboxamide = 5-[(5-phospho-1-deoxy-D-ribulos-1-ylimino)methylamino]-1-(5-phospho-beta-D-ribosyl)imidazole-4-carboxamide. It participates in amino-acid biosynthesis; L-histidine biosynthesis; L-histidine from 5-phospho-alpha-D-ribose 1-diphosphate: step 4/9. The polypeptide is 1-(5-phosphoribosyl)-5-[(5-phosphoribosylamino)methylideneamino] imidazole-4-carboxamide isomerase (Xanthomonas campestris pv. campestris (strain 8004)).